The following is a 176-amino-acid chain: Ribosome maturation factor RimM (176 aa).

A PRC barrel domain is found at 97–176 (EDEFYWRDLI…QILVDWDPDF (80 aa)).

Belongs to the RimM family. Binds ribosomal protein uS19.

Its subcellular location is the cytoplasm. An accessory protein needed during the final step in the assembly of 30S ribosomal subunit, possibly for assembly of the head region. Essential for efficient processing of 16S rRNA. May be needed both before and after RbfA during the maturation of 16S rRNA. It has affinity for free ribosomal 30S subunits but not for 70S ribosomes. The chain is Ribosome maturation factor RimM from Shewanella sp. (strain MR-4).